The chain runs to 314 residues: Glycine--tRNA ligase alpha subunit (314 aa).

The protein belongs to the class-II aminoacyl-tRNA synthetase family. As to quaternary structure, tetramer of two alpha and two beta subunits.

It is found in the cytoplasm. It catalyses the reaction tRNA(Gly) + glycine + ATP = glycyl-tRNA(Gly) + AMP + diphosphate. The sequence is that of Glycine--tRNA ligase alpha subunit from Leuconostoc citreum (strain KM20).